A 250-amino-acid polypeptide reads, in one-letter code: Triosephosphate isomerase (250 aa).

9 to 11 (NWK) is a binding site for substrate. The active-site Electrophile is His-96. The active-site Proton acceptor is the Glu-168. Residues Gly-174, Ser-216, and 237–238 (GG) each bind substrate.

Belongs to the triosephosphate isomerase family. Homodimer.

It localises to the cytoplasm. The enzyme catalyses D-glyceraldehyde 3-phosphate = dihydroxyacetone phosphate. The protein operates within carbohydrate biosynthesis; gluconeogenesis. It participates in carbohydrate degradation; glycolysis; D-glyceraldehyde 3-phosphate from glycerone phosphate: step 1/1. In terms of biological role, involved in the gluconeogenesis. Catalyzes stereospecifically the conversion of dihydroxyacetone phosphate (DHAP) to D-glyceraldehyde-3-phosphate (G3P). The protein is Triosephosphate isomerase of Leptospira interrogans serogroup Icterohaemorrhagiae serovar Lai (strain 56601).